A 424-amino-acid polypeptide reads, in one-letter code: Kynurenine--oxoglutarate transaminase 1 (424 aa).

Substrate is bound at residue Gly36. Position 82 is an N6-succinyllysine (Lys82). A substrate-binding site is contributed by Asn185. Lys247 carries the post-translational modification N6-(pyridoxal phosphate)lysine. Residue Arg398 participates in substrate binding. Residue Lys413 is modified to N6-succinyllysine.

This sequence belongs to the class-I pyridoxal-phosphate-dependent aminotransferase family. Homodimer. The cofactor is pyridoxal 5'-phosphate.

It is found in the cytoplasm. It localises to the cytosol. The enzyme catalyses L-kynurenine + 2-oxoglutarate = kynurenate + L-glutamate + H2O. The catalysed reaction is 3-phenylpyruvate + L-glutamine = 2-oxoglutaramate + L-phenylalanine. It catalyses the reaction an S-substituted L-cysteine + H2O = a thiol + pyruvate + NH4(+). Its pathway is amino-acid degradation; L-kynurenine degradation; kynurenate from L-kynurenine: step 1/2. Catalyzes the irreversible transamination of the L-tryptophan metabolite L-kynurenine to form kynurenic acid (KA), an intermediate in the tryptophan catabolic pathway which is also a broad spectrum antagonist of the three ionotropic excitatory amino acid receptors among others. Metabolizes the cysteine conjugates of certain halogenated alkenes and alkanes to form reactive metabolites. Catalyzes the beta-elimination of S-conjugates and Se-conjugates of L-(seleno)cysteine, resulting in the cleavage of the C-S or C-Se bond. The chain is Kynurenine--oxoglutarate transaminase 1 (Kyat1) from Mus musculus (Mouse).